The sequence spans 1002 residues: Probable transport protein MmpL10 (1002 aa).

The next 12 membrane-spanning stretches (helical) occupy residues 1–21 (MVGC…SLAE), 177–197 (IAVM…TMLL), 199–219 (LVTI…VSLV), 228–248 (AIVL…VFLI), 268–288 (AMMS…ITFL), 306–326 (AIGI…ILVL), 358–378 (YLGA…LAHF), 806–826 (IVAV…RAIV), 835–855 (VVIS…VFLG), 862–882 (VPGL…MLLA), 901–921 (VRCT…SMSG), and 923–943 (LFSS…GILI).

It belongs to the resistance-nodulation-cell division (RND) (TC 2.A.6) family. MmpL subfamily.

Its subcellular location is the cell membrane. The polypeptide is Probable transport protein MmpL10 (mmpL10) (Mycobacterium bovis (strain ATCC BAA-935 / AF2122/97)).